Here is a 743-residue protein sequence, read N- to C-terminus: Coiled-coil domain-containing protein 30 (743 aa).

2 stretches are compositionally biased toward basic and acidic residues: residues 1-22 (MSQE…REKQ) and 133-193 (SPKE…MKPE). 4 disordered regions span residues 1–25 (MSQE…QLAS), 114–193 (ENIC…MKPE), 208–233 (SLLQ…GDKL), and 695–715 (SKEA…LVCS). Coiled coils occupy residues 21–98 (KQLA…QLNH) and 165–580 (REGQ…LIHS). The segment covering 208–223 (SLLQSQSSGDSSDDSG) has biased composition (low complexity).

The protein belongs to the prefoldin subunit beta family.

This chain is Coiled-coil domain-containing protein 30 (CCDC30), found in Macaca fascicularis (Crab-eating macaque).